A 155-amino-acid polypeptide reads, in one-letter code: Cytochrome c-type biogenesis protein CcmE (155 aa).

Over 1 to 8 (MNPVRKRR) the chain is Cytoplasmic. A helical; Signal-anchor for type II membrane protein transmembrane segment spans residues 9 to 29 (LFIVLAILAGVGAAVALALSA). Topologically, residues 30-155 (LQQNINLFYT…YENGKPGGAQ (126 aa)) are periplasmic. Residues His124 and Tyr128 each coordinate heme.

Belongs to the CcmE/CycJ family.

It is found in the cell inner membrane. Heme chaperone required for the biogenesis of c-type cytochromes. Transiently binds heme delivered by CcmC and transfers the heme to apo-cytochromes in a process facilitated by CcmF and CcmH. The sequence is that of Cytochrome c-type biogenesis protein CcmE from Azotobacter vinelandii (strain DJ / ATCC BAA-1303).